The primary structure comprises 375 residues: Xylose transport system permease protein XylH (375 aa).

A run of 10 helical transmembrane segments spans residues 9-29 (LQVYIMLIAIAVIMAFFSVAT), 52-72 (LAIGMVFVIISAEIDLSVGSL), 85-105 (VWWGFPLPVTIIATIALGLIF), 118-138 (VPSFIVTLAGYLAFRGILIGL), 159-179 (LSDIAGVILGGIAVIGFVLWG), 199-219 (DFTKYALFAVIVLGAIYLLND), 220-240 (YRGIPFPVLVLAVLAILGLFL), 271-291 (KLIIFAMNGVLVAIAGLILSA), 319-339 (LAGGVGSVFGVVIGALIIASL), and 348-368 (VPTFWQYIVKGGILLLAVWID).

It belongs to the binding-protein-dependent transport system permease family. AraH/RbsC subfamily.

The protein localises to the cell inner membrane. Its function is as follows. Part of the binding-protein-dependent transport system for D-xylose. Probably responsible for the translocation of the substrate across the membrane. This is Xylose transport system permease protein XylH (xylH) from Haemophilus influenzae (strain ATCC 51907 / DSM 11121 / KW20 / Rd).